Here is a 71-residue protein sequence, read N- to C-terminus: Stathmin-1-B (71 aa).

Residues K1–E67 are a coiled coil. Residues K1–D71 form the SLD domain.

It belongs to the stathmin family. Binds to two alpha/beta-tubulin heterodimers. From unphosphorylated forms to highly phosphorylated ones in the mature egg, followed by progressive dephosphorylation from the mid-blastula to the tailbud stage. In terms of tissue distribution, ubiquitous. Mostly abundant in brain and oocytes.

It localises to the cytoplasm. Its subcellular location is the cytoskeleton. Involved in the regulation of the microtubule (MT) filament system by destabilizing microtubules. It prevents assembly and promotes disassembly of microtubules. In Xenopus laevis (African clawed frog), this protein is Stathmin-1-B (stmn1-b).